Reading from the N-terminus, the 490-residue chain is ATP synthase subunit beta, chloroplastic (490 aa).

170–177 (GGAGVGKT) contacts ATP.

It belongs to the ATPase alpha/beta chains family. In terms of assembly, F-type ATPases have 2 components, CF(1) - the catalytic core - and CF(0) - the membrane proton channel. CF(1) has five subunits: alpha(3), beta(3), gamma(1), delta(1), epsilon(1). CF(0) has four main subunits: a(1), b(1), b'(1) and c(9-12).

It localises to the plastid. It is found in the chloroplast thylakoid membrane. It carries out the reaction ATP + H2O + 4 H(+)(in) = ADP + phosphate + 5 H(+)(out). Produces ATP from ADP in the presence of a proton gradient across the membrane. The catalytic sites are hosted primarily by the beta subunits. This chain is ATP synthase subunit beta, chloroplastic, found in Ipomoea wrightii (Wright's morning glory).